The chain runs to 158 residues: UPF0225 protein PSEEN1229 (158 aa).

The protein belongs to the UPF0225 family.

This Pseudomonas entomophila (strain L48) protein is UPF0225 protein PSEEN1229.